The primary structure comprises 353 residues: UDP-galactose transporter (353 aa).

6 helical membrane-spanning segments follow: residues 147–167 (LGPMKWFSLFLLTGGIAIVQL), 184–204 (VTGFSAVLVACLISGLAGVYF), 215–235 (LWVRNVQLSFFSLFPCLFTIL), 254–274 (IVWLAILLQAGGGIIVALCVA), 279–299 (IMKNFSTSISIIISSLASVYL), and 302–322 (FKISLTFLIGVMLVIAATFLY). Positions 325–353 (PESKPSPSRGTYIPMTTQDAAAKDVDHKH) are disordered. Over residues 329-343 (PSPSRGTYIPMTTQD) the composition is skewed to polar residues.

It belongs to the nucleotide-sugar transporter family. SLC35A subfamily.

It localises to the golgi apparatus membrane. Essential for the transport of UDP-galactose into the lumen of Golgi apparatus. The polypeptide is UDP-galactose transporter (gms1) (Schizosaccharomyces pombe (strain 972 / ATCC 24843) (Fission yeast)).